The primary structure comprises 1035 residues: Cell-division control histidine kinase PdhS (1035 aa).

The interval methionine 1 to aspartate 613 is important for polar localization. The tract at residues glutamine 500–glutamate 533 is disordered. The tract at residues alanine 614 to aspartate 1035 is interaction with DivK. In terms of domain architecture, PAS spans histidine 659–valine 730. Residues arginine 802 to arginine 1031 form the Histidine kinase domain. Phosphohistidine; by autocatalysis is present on histidine 805.

In terms of assembly, interacts with DivK.

The protein localises to the cytoplasm. The catalysed reaction is ATP + protein L-histidine = ADP + protein N-phospho-L-histidine.. In terms of biological role, functions as a polar differentiation marker. Essential protein that, by localizing in the old pole of dividing cells, controls cell division and maturation, probably through control of DivK phosphorylation status and cellular distribution, which in turn regulates CtrA, a transcriptional regulator of the minB operon. The asymmetrical localization of this protein is probably required for cells to enter a new division cycle. In Brucella ovis (strain ATCC 25840 / 63/290 / NCTC 10512), this protein is Cell-division control histidine kinase PdhS (pdhS).